The primary structure comprises 129 residues: MKRHGILNSQISKVLADLGHTDTIVIADCGLPIPAGVARIDLALELGTPSFVDVVRIVADDMAVEQVTLATEIKAANPVALEAVMKLDVPQDYVSHEAFKELTKQAKVIIRTGEATPYANVILHAGVIF.

The active-site Proton donor is H20. Substrate contacts are provided by residues D28, H96, and 118-120; that span reads YAN.

It belongs to the RbsD / FucU family. RbsD subfamily. As to quaternary structure, homodecamer.

It is found in the cytoplasm. It catalyses the reaction beta-D-ribopyranose = beta-D-ribofuranose. The protein operates within carbohydrate metabolism; D-ribose degradation; D-ribose 5-phosphate from beta-D-ribopyranose: step 1/2. Its function is as follows. Catalyzes the interconversion of beta-pyran and beta-furan forms of D-ribose. In Exiguobacterium sibiricum (strain DSM 17290 / CCUG 55495 / CIP 109462 / JCM 13490 / 255-15), this protein is D-ribose pyranase.